We begin with the raw amino-acid sequence, 644 residues long: Sodium/potassium/calcium exchanger 3 (644 aa).

A signal peptide spans 1–44; it reads MRPSGDEDRARRRRRRRRRRDLLLSQLCFLASVALLLWSLSSLR. The Extracellular segment spans residues 45–107; it reads EQKELDLMDL…DIFTNEDRRQ (63 aa). N-linked (GlcNAc...) asparagine glycans are attached at residues Asn71 and Asn86. A helical transmembrane segment spans residues 108-128; the sequence is GAVVLHVLCAIYMFYALAIVC. Over 129–153 the chain is Cytoplasmic; sequence DDFFVPSLEKICERLHLSEDVAGAT. The Alpha-1 repeat unit spans residues 149-189; sequence VAGATFMAAGSSAPELFTSVIGVFITKGDVGVGTIVGSAVF. The helical transmembrane segment at 154–174 threads the bilayer; it reads FMAAGSSAPELFTSVIGVFIT. The Extracellular segment spans residues 175–182; it reads KGDVGVGT. A helical membrane pass occupies residues 183–203; that stretch reads IVGSAVFNILCIIGVCGLFAG. Residues 204-210 are Cytoplasmic-facing; the sequence is QVVALSS. A helical membrane pass occupies residues 211 to 231; sequence WCLLRDSIYYTLSVIALIVFI. Topologically, residues 232–234 are extracellular; it reads YDE. Residues 235–255 traverse the membrane as a helical segment; sequence KVSWWESLVLVLMYLIYIVIM. Topologically, residues 256 to 484 are cytoplasmic; sequence KYNACIHQCF…WFMVTFASST (229 aa). Ser308 is modified (phosphoserine). Residues 405–442 are disordered; it reads AEAGNETENENEDNENDEEEEEDEDDDEGPYTPFDTPS. Residues 409-433 show a composition bias toward acidic residues; the sequence is NETENENEDNENDEEEEEDEDDDEG. The chain crosses the membrane as a helical span at residues 485–505; sequence LWIAAFSYMMVWMVTIIGYTL. Over 506 to 510 the chain is Extracellular; it reads GIPDV. A helical transmembrane segment spans residues 511–531; that stretch reads IMGITFLAAGTSVPDCMASLI. The Alpha-2 repeat unit spans residues 518–549; it reads AAGTSVPDCMASLIVARQGMGDMAVSNSIGSN. At 532 to 549 the chain is on the cytoplasmic side; that stretch reads VARQGMGDMAVSNSIGSN. The helical transmembrane segment at 550 to 570 threads the bilayer; it reads VFDILIGLGLPWALQTLAVDY. The Extracellular portion of the chain corresponds to 571–580; that stretch reads GSYIRLNSRG. Residues 581–601 form a helical membrane-spanning segment; that stretch reads LIYSVGLLLASVFVTVFGVHL. The Cytoplasmic segment spans residues 602-615; sequence NKWQLDKKLGCGCL. Residues 616–636 form a helical membrane-spanning segment; sequence LLYGVFLCFSIMTEFNVFTFV. Topologically, residues 637–644 are extracellular; sequence NLPMCGDH.

Belongs to the Ca(2+):cation antiporter (CaCA) (TC 2.A.19) family. SLC24A subfamily. Abundant in the brain. Expressed at low levels in the aorta, uterus and intestine.

The protein localises to the cell membrane. It catalyses the reaction Ca(2+)(out) + K(+)(out) + 4 Na(+)(in) = Ca(2+)(in) + K(+)(in) + 4 Na(+)(out). Functionally, calcium, potassium:sodium antiporter that transports 1 Ca(2+) and 1 K(+) in exchange for 4 Na(+). This Homo sapiens (Human) protein is Sodium/potassium/calcium exchanger 3 (SLC24A3).